We begin with the raw amino-acid sequence, 89 residues long: Small ribosomal subunit protein uS15 (89 aa).

It belongs to the universal ribosomal protein uS15 family. As to quaternary structure, part of the 30S ribosomal subunit. Forms a bridge to the 50S subunit in the 70S ribosome, contacting the 23S rRNA.

Its function is as follows. One of the primary rRNA binding proteins, it binds directly to 16S rRNA where it helps nucleate assembly of the platform of the 30S subunit by binding and bridging several RNA helices of the 16S rRNA. In terms of biological role, forms an intersubunit bridge (bridge B4) with the 23S rRNA of the 50S subunit in the ribosome. This is Small ribosomal subunit protein uS15 from Bacillus licheniformis (strain ATCC 14580 / DSM 13 / JCM 2505 / CCUG 7422 / NBRC 12200 / NCIMB 9375 / NCTC 10341 / NRRL NRS-1264 / Gibson 46).